The primary structure comprises 38 residues: Photosystem I reaction center subunit IX (38 aa).

A helical membrane pass occupies residues 4 to 24; sequence FLTTAPVFSAIWFTLTAGIMI.

The protein belongs to the PsaJ family.

The protein localises to the plastid. Its subcellular location is the organellar chromatophore thylakoid membrane. Its function is as follows. May help in the organization of the PsaE and PsaF subunits. The polypeptide is Photosystem I reaction center subunit IX (Paulinella chromatophora).